Consider the following 1124-residue polypeptide: Sodium/hydrogen exchanger 11 (1124 aa).

The next 11 helical transmembrane spans lie at 25-45 (LVEE…GGLL), 52-72 (CEVI…HMAY), 90-110 (FSLY…DVEF), 120-140 (VLLT…YVVI), 179-199 (IYID…SIFF), 224-244 (DILG…CILA), 254-274 (IILC…LGMS), 305-325 (IFSS…IGCG), 335-355 (IPFI…TILL), 372-392 (GVVI…APDV), and 405-425 (MFIL…SYVM). 2 N-linked (GlcNAc...) asparagine glycosylation sites follow: Asn-447 and Asn-473. Helical transmembrane passes span 612-632 (TGQI…WPMA), 641-661 (ISIN…KIII), 674-694 (LEFF…FVKL), and 706-726 (VIMG…IVPI). Residues 642–723 (SINYYFMFLY…IRFLPLFKII (82 aa)) are ion transport-like. 867–999 (IWLEGKDVLI…EYKIWLKLAL (133 aa)) serves as a coordination point for a nucleoside 3',5'-cyclic phosphate.

The protein belongs to the monovalent cation:proton antiporter 1 (CPA1) transporter (TC 2.A.36) family.

It localises to the membrane. Involved in pH regulation. The chain is Sodium/hydrogen exchanger 11 (SLC9C2) from Homo sapiens (Human).